A 375-amino-acid polypeptide reads, in one-letter code: Queuine tRNA-ribosyltransferase (375 aa).

Aspartate 90 acts as the Proton acceptor in catalysis. Substrate is bound by residues 90-94, aspartate 144, glutamine 190, and glycine 217; that span reads DSGGF. The tract at residues 248 to 254 is RNA binding; the sequence is GIGTPHY. Residue aspartate 267 is the Nucleophile of the active site. An RNA binding; important for wobble base 34 recognition region spans residues 272 to 276; it reads TRIAR. The Zn(2+) site is built by cysteine 305, cysteine 307, cysteine 310, and histidine 336.

Belongs to the queuine tRNA-ribosyltransferase family. In terms of assembly, homodimer. Within each dimer, one monomer is responsible for RNA recognition and catalysis, while the other monomer binds to the replacement base PreQ1. Zn(2+) serves as cofactor.

The enzyme catalyses 7-aminomethyl-7-carbaguanine + guanosine(34) in tRNA = 7-aminomethyl-7-carbaguanosine(34) in tRNA + guanine. It participates in tRNA modification; tRNA-queuosine biosynthesis. Catalyzes the base-exchange of a guanine (G) residue with the queuine precursor 7-aminomethyl-7-deazaguanine (PreQ1) at position 34 (anticodon wobble position) in tRNAs with GU(N) anticodons (tRNA-Asp, -Asn, -His and -Tyr). Catalysis occurs through a double-displacement mechanism. The nucleophile active site attacks the C1' of nucleotide 34 to detach the guanine base from the RNA, forming a covalent enzyme-RNA intermediate. The proton acceptor active site deprotonates the incoming PreQ1, allowing a nucleophilic attack on the C1' of the ribose to form the product. After dissociation, two additional enzymatic reactions on the tRNA convert PreQ1 to queuine (Q), resulting in the hypermodified nucleoside queuosine (7-(((4,5-cis-dihydroxy-2-cyclopenten-1-yl)amino)methyl)-7-deazaguanosine). This is Queuine tRNA-ribosyltransferase from Borrelia duttonii (strain Ly).